The following is a 368-amino-acid chain: MFAKGKGSAVPSDGQAREKLALYVYEYLLHVGAQKSAQTFLSEIRWEKNITLGEPPGFLHSWWCVFWDLYCAAPERRDTCEHSSEAKAFHDYSAAAAPSPVLGNIPPNDGMPGGPIPPGFFQGPPGSQPSPHAQPPPHNPNSMMGPHSQPPGAVPGTQPLLPNSMDPTRQQGHPNMGGPMQRMNPPRGMGPMGPGPQNYGSGMRPPPNSLGPGMPGINMGPGAGRPWPNPSSANSIPYSSSSPGTYVGPPGGGGPPGTPIMPSPADSTNSSDNIYTMINPVPPAGSRSNFPMGPGSDGPMGGMGGMEPHHMNGSLGSGDIDGLPKNSPNNISGISNPPGTPRDDGELGGNFLHSFQNDNYSPSMTMSV.

One can recognise a LisH domain in the interval 16-48 (AREKLALYVYEYLLHVGAQKSAQTFLSEIRWEK). A disordered region spans residues 100–368 (PVLGNIPPND…NYSPSMTMSV (269 aa)). The segment covering 126–139 (GSQPSPHAQPPPHN) has biased composition (pro residues). Low complexity-rich tracts occupy residues 174–189 (PNMG…PRGM), 211–220 (GPGMPGINMG), and 230–248 (PSSA…TYVG). A compositionally biased stretch (pro residues) spans 252 to 262 (GGGPPGTPIMP). Over residues 265 to 276 (ADSTNSSDNIYT) the composition is skewed to polar residues. A compositionally biased stretch (gly residues) spans 295–305 (GSDGPMGGMGG). Low complexity predominate over residues 326 to 337 (NSPNNISGISNP). Residues 353–368 (HSFQNDNYSPSMTMSV) are compositionally biased toward polar residues.

As to expression, expressed in embryonic fibroblasts and chondrocytes.

The protein localises to the nucleus. In terms of biological role, may be involved in transcription regulation of the alpha 2(I) collagen gene where it binds to the single-stranded polypyrimidine sequences in the promoter region. This Gallus gallus (Chicken) protein is Single-stranded DNA-binding protein 3 (SSBP3).